The chain runs to 158 residues: Ribonuclease H (158 aa).

The 142-residue stretch at 2–143 (PEKIIELFTD…VDALLNRVMD (142 aa)) folds into the RNase H type-1 domain. The Mg(2+) site is built by Asp-11, Glu-49, Asp-71, and Asp-135.

Belongs to the RNase H family. In terms of assembly, monomer. Mg(2+) serves as cofactor.

Its subcellular location is the cytoplasm. The enzyme catalyses Endonucleolytic cleavage to 5'-phosphomonoester.. Functionally, endonuclease that specifically degrades the RNA of RNA-DNA hybrids. The protein is Ribonuclease H of Acidithiobacillus ferrooxidans (strain ATCC 23270 / DSM 14882 / CIP 104768 / NCIMB 8455) (Ferrobacillus ferrooxidans (strain ATCC 23270)).